The primary structure comprises 374 residues: tRNA-specific 2-thiouridylase MnmA (374 aa).

Residues 12 to 19 and Met38 contribute to the ATP site; that span reads GMSGGVDS. The tract at residues 98–100 is interaction with target base in tRNA; it reads NPD. Cys103 acts as the Nucleophile in catalysis. Cys103 and Cys202 form a disulfide bridge. Residue Gly128 participates in ATP binding. The segment at 152 to 154 is interaction with tRNA; the sequence is KDQ. Residue Cys202 is the Cysteine persulfide intermediate of the active site. An interaction with tRNA region spans residues 316 to 317; the sequence is RY.

The protein belongs to the MnmA/TRMU family.

It localises to the cytoplasm. The catalysed reaction is S-sulfanyl-L-cysteinyl-[protein] + uridine(34) in tRNA + AH2 + ATP = 2-thiouridine(34) in tRNA + L-cysteinyl-[protein] + A + AMP + diphosphate + H(+). Functionally, catalyzes the 2-thiolation of uridine at the wobble position (U34) of tRNA, leading to the formation of s(2)U34. The protein is tRNA-specific 2-thiouridylase MnmA of Vibrio vulnificus (strain CMCP6).